A 392-amino-acid chain; its full sequence is Caveolae-associated protein 1 (392 aa).

Methionine 1 carries the N-acetylmethionine modification. Residues 1-10 are compositionally biased toward basic and acidic residues; it reads MEDVTLHIVE. A disordered region spans residues 1 to 45; sequence MEDVTLHIVERPYSGFPDASSEGPEPTQGEARATEEPSGTGSDEL. The tract at residues 1–100 is required for homotrimerization and for interaction with CAVIN2 and CAVIN3; it reads MEDVTLHIVE…IQGELSKLGK (100 aa). Serine 21 and serine 38 each carry phosphoserine. The residue at position 40 (threonine 40) is a Phosphothreonine. Phosphoserine occurs at positions 42 and 48. Residues 54 to 64 are nuclear export signal; that stretch reads VLVLSLLDKII. The leucine-zipper 1 stretch occupies residues 55 to 77; the sequence is LVLSLLDKIIGAVDQIQLTQAQL. Residue lysine 118 forms a Glycyl lysine isopeptide (Lys-Gly) (interchain with G-Cter in SUMO2) linkage. The residue at position 120 (serine 120) is a Phosphoserine. Lysine 124 participates in a covalent cross-link: Glycyl lysine isopeptide (Lys-Gly) (interchain with G-Cter in SUMO2). The interval 138–154 is nuclear localization signal; it reads KKLEVNEAELLRRRNFK. Tyrosine 158 is subject to Phosphotyrosine. Lysine 163 is covalently cross-linked (Glycyl lysine isopeptide (Lys-Gly) (interchain with G-Cter in SUMO1); alternate). Lysine 163 participates in a covalent cross-link: Glycyl lysine isopeptide (Lys-Gly) (interchain with G-Cter in SUMO2); alternate. Residue lysine 167 forms a Glycyl lysine isopeptide (Lys-Gly) (interchain with G-Cter in SUMO2) linkage. The interval 168–188 is leucine-zipper 2; that stretch reads LSVSKSLKESEALPEKEGDEL. A phosphoserine mark is found at serine 169 and serine 171. A Glycyl lysine isopeptide (Lys-Gly) (interchain with G-Cter in SUMO2) cross-link involves residue lysine 172. Serine 173 and serine 177 each carry phosphoserine. Basic and acidic residues predominate over residues 173 to 183; the sequence is SLKESEALPEK. The tract at residues 173 to 197 is disordered; it reads SLKESEALPEKEGDELGEGERPEDD. Residues 184-197 show a composition bias toward acidic residues; sequence EGDELGEGERPEDD. Phosphothreonine is present on threonine 198. Residues 201-284 adopt a coiled-coil conformation; the sequence is IELSSDEAVE…RMNKLGTRLV (84 aa). Phosphoserine occurs at positions 204 and 205. The interval 235-251 is nuclear localization signal; sequence KKAFSKEKMEKTKVRTR. The interval 259-299 is leucine-zipper 3; it reads LKTKENLEKTRHTLEKRMNKLGTRLVPVERREKLKTSRDKL. A Phosphoserine modification is found at serine 302. Threonine 304 carries the phosphothreonine modification. The residue at position 310 (tyrosine 310) is a Phosphotyrosine. Lysine 328 participates in a covalent cross-link: Glycyl lysine isopeptide (Lys-Gly) (interchain with G-Cter in SUMO2). Residues 347–367 form a disordered region; sequence GPEDDEVGAERGEATDLLRGS. Phosphoserine is present on residues serine 367, serine 368, serine 381, serine 389, and serine 391.

The protein belongs to the CAVIN family. As to quaternary structure, component of the CAVIN complex composed of CAVIN1, CAVIN2, CAVIN3 and CAVIN4. Homotrimer. Interacts with LIPE in the adipocyte cytoplasm. Interacts with RNA polymerase I subunit POLR1A/RPA1. Interacts with TTF1. Binds the 3' end of pre-rRNA. Interacts with transcription factor ZNF148. Interacts with CAV1, CAVIN2 and CAVIN3. Interacts with CAVIN4. Phosphorylated. Present in active and inactive forms. Changes in phosphorylation pattern may alter activity. Phosphorylation at Tyr-158 is essential for its function in the regulation of the ribosomal transcriptional activity. Post-translationally, monoubiquitinated. As to expression, expressed in the heart, stomach, adipose tissue and lung (at protein level). Expressed in testis, kidney, muscle, liver, spleen and brain.

Its subcellular location is the membrane. It is found in the caveola. The protein resides in the cell membrane. It localises to the microsome. The protein localises to the endoplasmic reticulum. Its subcellular location is the cytoplasm. It is found in the cytosol. The protein resides in the mitochondrion. It localises to the nucleus. Functionally, plays an important role in caveolae formation and organization. Essential for the formation of caveolae in all tissues. Core component of the CAVIN complex which is essential for recruitment of the complex to the caveolae in presence of calveolin-1 (CAV1). Essential for normal oligomerization of CAV1. Promotes ribosomal transcriptional activity in response to metabolic challenges in the adipocytes and plays an important role in the formation of the ribosomal transcriptional loop. Dissociates transcription complexes paused by DNA-bound TTF1, thereby releasing both RNA polymerase I and pre-RNA from the template. The caveolae biogenesis pathway is required for the secretion of proteins such as GASK1A. This is Caveolae-associated protein 1 (Cavin1) from Mus musculus (Mouse).